The primary structure comprises 248 residues: Ras-related protein Rab-28 (248 aa).

Positions 1-30 (MTTMGEDEAPALPKKSPLPEKIDEADVDDD) are disordered. GTP is bound at residue 42 to 50 (GDGASGKTS). Residues 64 to 72 (YHQTLGLDF) carry the Effector region motif. GTP-binding positions include 91–95 (DIGGQ), 152–155 (NKTD), and 182–184 (SAK). Residues 227 to 248 (QSDASYARRSDQSRSTSVCSIT) form a disordered region. Polar residues predominate over residues 239-248 (SRSTSVCSIT).

Belongs to the small GTPase superfamily. Rab family. Expressed in amphid and phasmid ciliated sensory neurons.

It localises to the cell projection. It is found in the cilium membrane. Its subcellular location is the perikaryon. The protein localises to the cytoplasm. The protein resides in the cytoskeleton. It localises to the cilium axoneme. In terms of biological role, GTPase. Intraflagellar transport (IFT) cargo that undergoes bidirectional IFT along the ciliary axoneme when in active GTP-bound state in amphid and phasmid ciliated sensory neurons. Targeting and function as IFT cargo may depend on the BBSome, an IFT cargo adapter. Does not undergo IFT when in inactive GDP-bound state. May in turn play a role in cilium structure and/or function in ciliated sensory neurons. This Caenorhabditis elegans protein is Ras-related protein Rab-28.